A 96-amino-acid polypeptide reads, in one-letter code: Putative antiholin (96 aa).

Topologically, residues 1 to 4 (MIEM) are periplasmic. 2 consecutive stretches face the cytoplasmic side: residues 1–32 (MIEM…KKTE) and 26–29 (QAIK). Residues 5–25 (EFGKELLVYMTFLVVVTPVFV) traverse the membrane as a helical segment. A helical transmembrane segment spans residues 33–55 (LVPSKWLPTVSILIGAILGALAT). Residues 56–60 (FLDGS) are Periplasmic-facing. Residues 61–81 (GSLATMIWAGALAGAGGTGLF) traverse the membrane as a helical segment. Over 82 to 96 (EQFTNRSKKYGEDDK) the chain is Cytoplasmic.

As to quaternary structure, homomultimer. Interacts with isoform Antiholin; this interaction blocks the holin homomultimerization and delays host cell lysis.

The protein resides in the host cell inner membrane. Accumulates harmlessly in the cytoplasmic membrane until it reaches a critical concentration that triggers the formation of micron-scale pores (holes) causing host cell membrane disruption and endolysin escape into the periplasmic space. Determines the precise timing of host cell lysis. Participates with the endolysin and spanin proteins in the sequential events which lead to the programmed host cell lysis releasing the mature viral particles from the host cell. In terms of biological role, isoform Antiholin: Counteracts the aggregation of the holin molecules and thus of pore formation. The protein is Putative antiholin (hol) of Listeria monocytogenes (Bacteriophage A118).